The primary structure comprises 758 residues: MGLPDGSDQGTHQTQALLSAAQEMELQRRDYHVERPLLNQEQLEDLGHWGPAAKTHQWRTWFRCSRARAHSLLLQHVPVLGWLPRYPVREWLLGDLLSGLSVAIMQLPQGLAYALLAGLPPMFGLYSSFYPVFIYFLFGTSRHISVGTFAVMSVMVGSVTESLTADKAFVQGLNATADDARVQVAYTLSFLVGLFQVGLGLVHFGFVVTYLSEPLVRSYTTAASVQVLVSQLKYVFGIKLSSHSGPLSVIYTVLEVCAQLPETVPGTVVTAIVAGVALVLVKLLNEKLHRRLPLPIPGELLTLIGATGISYGVKLNDRFKVDVVGNITTGLIPPVAPKTELFATLVGNAFAIAVVGFAIAISLGKIFALRHGYRVDSNQELVALGLSNLIGGFFQCFPVSCSMSRSLVQESTGGNTQVAGAVSSLFILLIIVKLGELFRDLPKAVLAAVIIVNLKGMMKQFSDICSLWKANRVDLLIWLVTFVATILLNLDIGLAVSIVFSLLLVVVRMQLPHYSVLGQVPDTDIYRDVAEYSGAKEVPGVKVFRSSATLYFANAELYSDSLKEKCGVDVDRLITQKKKRIKKQEMKLKRMKKAKKSQKQDASSKISSVSVNVNTNLEDVKSNDVEGSEAKVHQGEELQDVVSSNQEDAKAPTMTSLKSLGLPQPGFHSLILDLSTLSFVDTVCIKSLKNIFRDFREIEVEVYIAACYSPVVAQLEAGHFFDESITKQHVFASVHDAVTFALSHRKSVPKSPVLATKL.

Residues 1–117 are Cytoplasmic-facing; that stretch reads MGLPDGSDQG…PQGLAYALLA (117 aa). A helical membrane pass occupies residues 118-138; it reads GLPPMFGLYSSFYPVFIYFLF. Over 139-187 the chain is Extracellular; that stretch reads GTSRHISVGTFAVMSVMVGSVTESLTADKAFVQGLNATADDARVQVAYT. N174 carries N-linked (GlcNAc) asparagine glycosylation. A helical transmembrane segment spans residues 188–208; sequence LSFLVGLFQVGLGLVHFGFVV. Residues 209-263 are Cytoplasmic-facing; it reads TYLSEPLVRSYTTAASVQVLVSQLKYVFGIKLSSHSGPLSVIYTVLEVCAQLPET. The chain crosses the membrane as a helical span at residues 264 to 284; sequence VPGTVVTAIVAGVALVLVKLL. Residues 285 to 292 are Extracellular-facing; it reads NEKLHRRL. A helical membrane pass occupies residues 293–313; that stretch reads PLPIPGELLTLIGATGISYGV. The Cytoplasmic portion of the chain corresponds to 314–340; sequence KLNDRFKVDVVGNITTGLIPPVAPKTE. A helical membrane pass occupies residues 341–361; sequence LFATLVGNAFAIAVVGFAIAI. Residues 362–380 lie on the Extracellular side of the membrane; sequence SLGKIFALRHGYRVDSNQE. Residues 381 to 401 traverse the membrane as a helical segment; the sequence is LVALGLSNLIGGFFQCFPVSC. At 402–417 the chain is on the cytoplasmic side; sequence SMSRSLVQESTGGNTQ. Residues 418-438 traverse the membrane as a helical segment; that stretch reads VAGAVSSLFILLIIVKLGELF. The Extracellular portion of the chain corresponds to 439-485; the sequence is RDLPKAVLAAVIIVNLKGMMKQFSDICSLWKANRVDLLIWLVTFVAT. Residues 486–506 traverse the membrane as a helical segment; the sequence is ILLNLDIGLAVSIVFSLLLVV. Topologically, residues 507–758 are cytoplasmic; it reads VRMQLPHYSV…PKSPVLATKL (252 aa). The region spanning 531–741 is the STAS domain; that stretch reads EYSGAKEVPG…ASVHDAVTFA (211 aa). The segment at 585–608 is disordered; it reads EMKLKRMKKAKKSQKQDASSKISS. A Phosphoserine modification is found at S751.

As to quaternary structure, interacts (via C-terminal domain) with PDZK1 (via C-terminal PDZ domain); the interaction induces chloride and oxalate exchange transport. Interacts with CFTR, SLC26A3 and NHERF1. Interacts with AHCYL1; the interaction increases SLC26A6 activity. N-glycosylated. Glycosylation at Asn-174 positively regulates its chloride oxalate exchanger activity. As to expression, expressed in kidney (at protein level). Expressed in spermatogenic cells. Expressed in intestine, kidney, testis, brain, muscle, heart, and stomach. Expressed in the submandibular and sublingual salivary glands. In terms of tissue distribution, highly expressed in stomach, kidney, heart and small intestine, low in the lung, liver, testis, brain, skeletal muscle and colon. Expressed in the heart.

The protein localises to the cell membrane. Its subcellular location is the apical cell membrane. It localises to the cytoplasmic vesicle membrane. The protein resides in the microsome. The catalysed reaction is 2 hydrogencarbonate(in) + chloride(out) = 2 hydrogencarbonate(out) + chloride(in). It carries out the reaction oxalate(in) + chloride(out) = oxalate(out) + chloride(in). The enzyme catalyses oxalate(in) + formate(out) = oxalate(out) + formate(in). It catalyses the reaction oxalate(in) + sulfate(out) = oxalate(out) + sulfate(in). The catalysed reaction is formate(in) + chloride(out) = formate(out) + chloride(in). It carries out the reaction sulfate(in) = sulfate(out). Apical membrane chloride-bicarbonate exchange activity of the pancreatic duct is inhibited by 4,4'-diisothiocyanatostilbene-2,2'-disulfonic acid (DIDS). Oxalate secretion in the duodenum and chloride-formate exchange activity is inhibited by DIDS. Its activity is regulated as follows. Chloride-formate exchange activity and transcellular sulfate absorption is inhibited by 4,4'-diisothiocyanatostilbene-2,2'-disulfonic acid (DIDS). Functionally, apical membrane anion-exchanger with wide epithelial distribution that plays a role as a component of the pH buffering system for maintaining acid-base homeostasis. Acts as a versatile DIDS-sensitive inorganic and organic anion transporter that mediates the uptake of monovalent anions like chloride, bicarbonate, formate and hydroxyl ion and divalent anions like sulfate and oxalate. Functions in multiple exchange modes involving pairs of these anions, which include chloride-bicarbonate, chloride-oxalate, oxalate-formate, oxalate-sulfate and chloride-formate exchange. Apical membrane chloride-bicarbonate exchanger that mediates luminal chloride absorption and bicarbonate secretion by the small intestinal brush border membrane and contributes to intracellular pH regulation in the duodenal upper villous epithelium during proton-coupled peptide absorption, possibly by providing a bicarbonate import pathway. Its association with carbonic anhydrase CA2 forms a bicarbonate transport metabolon; hence maximizes the local concentration of bicarbonate at the transporter site. Also mediates intestinal chloride absorption and oxalate secretion, thereby preventing hyperoxaluria and calcium oxalate urolithiasis. Transepithelial oxalate secretion, chloride-formate, chloride-oxalate and chloride-bicarbonate transport activities in the duodenum are inhibited by PKC activation in a calcium-independent manner. The apical membrane chloride-bicarbonate exchanger also provides a major route for fluid and bicarbonate secretion into the proximal tubules of the kidney as well as into the proximal part of the interlobular pancreatic ductal tree, where it mediates electrogenic chloride-bicarbonate exchange with a chloride-bicarbonate stoichiometry of 1:2, and hence will dilute and alkalinize protein-rich acinar secretion. Also mediates the transcellular sulfate absorption and oxalate secretion across the apical membrane in the duodenum and the formate ion efflux at the apical brush border of cells in the proximal tubules of kidney. Plays a role in sperm capacitation by increasing intracellular pH. Its function is as follows. Mediates electrogenic chloride-bicarbonate exchange with a chloride-bicarbonate stoichiometry of 1:2. Also mediates exchange of chloride-formate and chloride-oxalate ions. Mediates transcellular sulfate absorption. This chain is Solute carrier family 26 member 6, found in Mus musculus (Mouse).